The primary structure comprises 301 residues: tRNA U34 carboxymethyltransferase (301 aa).

Residues K70, W84, K89, G108, 130-132 (DPS), 157-158 (VE), Y177, and R292 contribute to the carboxy-S-adenosyl-L-methionine site.

The protein belongs to the class I-like SAM-binding methyltransferase superfamily. CmoB family. In terms of assembly, homotetramer.

It catalyses the reaction carboxy-S-adenosyl-L-methionine + 5-hydroxyuridine(34) in tRNA = 5-carboxymethoxyuridine(34) in tRNA + S-adenosyl-L-homocysteine + H(+). Catalyzes carboxymethyl transfer from carboxy-S-adenosyl-L-methionine (Cx-SAM) to 5-hydroxyuridine (ho5U) to form 5-carboxymethoxyuridine (cmo5U) at position 34 in tRNAs. This chain is tRNA U34 carboxymethyltransferase, found in Sulfurovum sp. (strain NBC37-1).